The primary structure comprises 471 residues: Cytochrome b-c1 complex subunit 1, mitochondrial (471 aa).

Belongs to the peptidase M16 family.

It localises to the mitochondrion matrix. The sequence is that of Cytochrome b-c1 complex subunit 1, mitochondrial (ucr-1) from Caenorhabditis elegans.